A 320-amino-acid polypeptide reads, in one-letter code: Probable L-ascorbate peroxidase 5, chloroplastic (320 aa).

The N-terminal 42 residues, 1–42, are a transit peptide targeting the chloroplast; it reads MAVVHRILRRGLSAASPLPSLRGLLLVSPQELGRRPASSSSS. H80 serves as the catalytic Proton acceptor. Residue H209 coordinates heme b. T210 contributes to the K(+) binding site. The interval 213–241 is disordered; that stretch reads RARPERSGWGKPETKYTENGPGAPGGQSW. Over residues 214-228 the composition is skewed to basic and acidic residues; the sequence is ARPERSGWGKPETKY. Residues T242 and D249 each coordinate K(+).

This sequence belongs to the peroxidase family. Ascorbate peroxidase subfamily. Heme b is required as a cofactor. As to expression, expressed in leaves, stems and flowers.

It is found in the plastid. The protein localises to the chloroplast stroma. The catalysed reaction is L-ascorbate + H2O2 = L-dehydroascorbate + 2 H2O. Its function is as follows. Plays a key role in hydrogen peroxide removal. The sequence is that of Probable L-ascorbate peroxidase 5, chloroplastic from Oryza sativa subsp. japonica (Rice).